The sequence spans 211 residues: Protein 33K (211 aa).

Disordered regions lie at residues 1-95 (MPPK…PCSL) and 107-140 (AGSP…QDSP). Residues 24–65 (DEEETWDDSQAEEVSDEEAEEQMESWDSLDEEDLEDVEEETI) are compositionally biased toward acidic residues. Over residues 83-92 (KTIPPLPPQP) the composition is skewed to pro residues. Over residues 129–140 (TSSAIATRQDSP) the composition is skewed to polar residues. Residues 154 to 181 (YAIFQQSRGQQLELKVKNRSLRSLTRSC) form a necessary for nuclear subcellular location region. The tract at residues 160–180 (SRGQQLELKVKNRSLRSLTRS) is RS-repeat; required for splicing enhancer activity.

This sequence belongs to the adenoviridae splicing factor family. In terms of assembly, homooligomer. Interacts with DBP; this interaction occurs at a unique vertex during genome packaging. Interacts with IVa2; this interaction occurs at a unique vertex during genome packaging and seems to potentiate IVa2 and 33K oligomerization. Post-translationally, phosphorylated in vitro by human PKA and PRKDC. PRKDC inhibits, whereas PKA activates the splicing factor.

It localises to the host nucleus. In terms of biological role, promotes alternative splicing of late transcripts by promoting splicing at weak 3' splice sites. Required for the temporal activation of major late pre-mRNA splicing at late times of infection. Induces the splicing and expression of the late capsid vertex protein. Probably functions as the small terminase that is part of the molecular motor that translocates genomic DNA in empty capsid during DNA packaging. This motor is located at a unique vertex and comprises at least the IVa2 ATPase, the small terminase 33K and probably a portal. Forms a ring-like structure of about 17 nm in which genomic DNA is translocated into the capsid. Stimulates IVa2 ATPase activity in the presence of the viral genome. Once the DNA is packaged, the terminase detaches: the 33K protein is present in the empty particles, but not in the mature virions. Also involved in virion assembly. The protein is Protein 33K of Human adenovirus F serotype 40 (HAdV-40).